Consider the following 771-residue polypeptide: Metal transporter CNNM4 (771 aa).

Residues 1–175 (MAPGGGGGRR…LLFMVEEHGR (175 aa)) lie on the Extracellular side of the membrane. N119 carries N-linked (GlcNAc...) asparagine glycosylation. The region spanning 175-355 (RFLPLWLHIL…EPYNDLVKEE (181 aa)) is the CNNM transmembrane domain. Residues 176–196 (FLPLWLHILLVMVLLVLSGIF) form a helical membrane-spanning segment. Over 197-237 (SGLNLGLMALDPMELRIVQNCGTEKERKYARKIEPIRRKGN) the chain is Cytoplasmic. Positions 238–258 (YLLCSLLLGNVLVNTSLTILL) form an intramembrane region, helical. Over 259-261 (DNL) the chain is Cytoplasmic. The helical transmembrane segment at 262 to 282 (IGSGIMAVASSTIGIVIFGEI) threads the bilayer. At 283-290 (LPQALCSR) the chain is on the extracellular side. A helical transmembrane segment spans residues 291 to 313 (HGLAVGANTIVLTKVFMLLTFPL). The Cytoplasmic portion of the chain corresponds to 314–771 (SFPISKLLDF…LHRASEEETI (458 aa)). 2 consecutive CBS domains span residues 374–435 (MTQL…CTPL) and 442–508 (YNHP…ILDE). S657, S661, and S766 each carry phosphoserine.

The protein belongs to the ACDP family. As to quaternary structure, interacts with COX11. In terms of tissue distribution, cornea, retina, teeth (at protein level). In the retina it is predominantly localized to the outer plexiform layer, inner plexiform layer and ganglion cell layer. In the tooth strongest expression is observed in the cell body of the ameloblasts. Expressed at high levels in the gastrointestinal tract and testis.

The protein localises to the cell membrane. Its function is as follows. Probable metal transporter. The interaction with the metal ion chaperone COX11 suggests that it may play a role in sensory neuron functions. May play a role in biomineralization and retinal function. The protein is Metal transporter CNNM4 (Cnnm4) of Mus musculus (Mouse).